The chain runs to 121 residues: Large ribosomal subunit protein bL12 (121 aa).

This sequence belongs to the bacterial ribosomal protein bL12 family. In terms of assembly, homodimer. Part of the ribosomal stalk of the 50S ribosomal subunit. Forms a multimeric L10(L12)X complex, where L10 forms an elongated spine to which 2 to 4 L12 dimers bind in a sequential fashion. Binds GTP-bound translation factors.

In terms of biological role, forms part of the ribosomal stalk which helps the ribosome interact with GTP-bound translation factors. Is thus essential for accurate translation. This is Large ribosomal subunit protein bL12 from Streptococcus agalactiae serotype Ia (strain ATCC 27591 / A909 / CDC SS700).